The following is a 149-amino-acid chain: Putative sugar phosphate isomerase YwlF (149 aa).

H9 contributes to the substrate binding site. C66 functions as the Proton acceptor in the catalytic mechanism. A substrate-binding site is contributed by 67–72 (GTGIGM). Residue H99 is the Proton donor of the active site. R133 is a substrate binding site.

It belongs to the LacAB/RpiB family.

The sequence is that of Putative sugar phosphate isomerase YwlF (ywlF) from Bacillus subtilis (strain 168).